The sequence spans 457 residues: Heme sensor protein HssS (457 aa).

Transmembrane regions (helical) follow at residues 9–29 (IAIYSITVILFSALISFVLTN) and 164–184 (TFLAVLLMLLLFISISLVIAS). Residues 186–238 (YSIIRPVKKLKLATERLIDGDFETPIKQTRKDEIGTLQYHFNKMRESLGQVDQ) enclose the HAMP domain. Residues 246–456 (NVSHEIKTPL…TFTITLPNNS (211 aa)) enclose the Histidine kinase domain. Histidine 249 carries the post-translational modification Phosphohistidine; by autocatalysis.

Post-translationally, autophosphorylated.

It is found in the cell membrane. It catalyses the reaction ATP + protein L-histidine = ADP + protein N-phospho-L-histidine.. Its function is as follows. Member of the two-component regulatory system HssS/HssR involved in intracellular heme homeostasis and tempering of staphylococcal virulence. HssS functions as a heme sensor histidine kinase which is autophosphorylated at a histidine residue and transfers its phosphate group to an aspartate residue of HssR. HssR/HssS activates the expression of hrtAB, an efflux pump, in response to extracellular heme, hemin, hemoglobin or blood. The polypeptide is Heme sensor protein HssS (hssS) (Staphylococcus aureus (strain USA300)).